The following is a 344-amino-acid chain: Eukaryotic translation initiation factor 2 subunit alpha (344 aa).

The S1 motif domain occupies 21 to 92 (DMAVMIQVKT…ERGYIDLSKR (72 aa)). Phosphoserine; by GCN2 is present on Ser56. Residues 309–344 (LRMDNEEMSGDEGSEDEEEDTGMGEVDIDGGSGIIE) are disordered. Acidic residues predominate over residues 314–336 (EEMSGDEGSEDEEEDTGMGEVDI). A phosphoserine; by CK2 mark is found at Ser317 and Ser322.

It belongs to the eIF-2-alpha family. As to quaternary structure, eukaryotic translation initiation factor 2 eIF2 is a heterotrimeric complex composed of an alpha, a beta and a gamma subunit. Phosphorylated at Ser-56 by GCN2. Phosphorylated at Ser-317 and Ser-322 by CK2.

It localises to the cytoplasm. The protein localises to the cytosol. In terms of biological role, functions in the early steps of protein synthesis by forming a ternary complex with GTP and initiator tRNA. This complex binds to a 40S ribosomal subunit, followed by mRNA binding to form a 43S pre-initiation complex. Junction of the 60S ribosomal subunit to form the 80S initiation complex is preceded by hydrolysis of the GTP bound to eIF-2 and release of an eIF-2-GDP binary complex. In order for eIF-2 to recycle and catalyze another round of initiation, the GDP bound to eIF-2 must exchange with GTP by way of a reaction catalyzed by eIF2B. This Arabidopsis thaliana (Mouse-ear cress) protein is Eukaryotic translation initiation factor 2 subunit alpha.